We begin with the raw amino-acid sequence, 98 residues long: Large ribosomal subunit protein uL23 (98 aa).

This sequence belongs to the universal ribosomal protein uL23 family. As to quaternary structure, part of the 50S ribosomal subunit. Contacts protein L29, and trigger factor when it is bound to the ribosome.

Functionally, one of the early assembly proteins it binds 23S rRNA. One of the proteins that surrounds the polypeptide exit tunnel on the outside of the ribosome. Forms the main docking site for trigger factor binding to the ribosome. In Sorangium cellulosum (strain So ce56) (Polyangium cellulosum (strain So ce56)), this protein is Large ribosomal subunit protein uL23.